Here is a 214-residue protein sequence, read N- to C-terminus: Probable GTP-binding protein EngB (214 aa).

An EngB-type G domain is found at 22-194 (NLPEIAFAGR…WARIDALLSP (173 aa)). Residues 30–37 (GRSNVGKS), 57–61 (GRTQL), 75–78 (DLPG), 142–145 (TKCD), and 173–175 (FSA) contribute to the GTP site. The Mg(2+) site is built by serine 37 and threonine 59.

Belongs to the TRAFAC class TrmE-Era-EngA-EngB-Septin-like GTPase superfamily. EngB GTPase family. It depends on Mg(2+) as a cofactor.

Functionally, necessary for normal cell division and for the maintenance of normal septation. The sequence is that of Probable GTP-binding protein EngB from Citrifermentans bemidjiense (strain ATCC BAA-1014 / DSM 16622 / JCM 12645 / Bem) (Geobacter bemidjiensis).